A 1388-amino-acid polypeptide reads, in one-letter code: Rho-associated protein kinase 2 (1388 aa).

The tract at residues 1 to 27 (MSRPPPTGKMPGAPETAPGDGAGASRQ) is disordered. One can recognise a Protein kinase domain in the interval 92 to 354 (YDVVKVIGRG…VEEIRQHPFF (263 aa)). ATP contacts are provided by residues 98–106 (IGRGAFGEV) and Lys121. Asp214 acts as the Proton acceptor in catalysis. Positions 357 to 425 (DQWHWDNIRE…YRENLLLSDS (69 aa)) constitute an AGC-kinase C-terminal domain. Residues 363–784 (NIRETAAPVV…INELLKQKDV (422 aa)) form an interaction with PPP1R12A region. The tract at residues 373–420 (PELSSDIDSSNFDDIEDDKGDVETFPIPKAFVGNQLPFIGFTYYRENL) is interaction with NPM1. Thr414 is subject to Phosphothreonine; by ROCK2. Coiled coils occupy residues 429-1024 (RETD…EKQL) and 1053-1131 (DTDV…IGLD). Positions 497–573 (ALRQLEREKA…LDETNALLRT (77 aa)) constitute an REM-1 domain. Position 722 is a phosphotyrosine; by SRC (Tyr722). A RhoBD domain is found at 979–1047 (TSDVANLANE…LAEIMNRKEP (69 aa)). Positions 979 to 1047 (TSDVANLANE…LAEIMNRKEP (69 aa)) are RHOA binding. Ser1137 carries the phosphoserine modification. A PH domain is found at 1150 to 1349 (ESRLEGWLSL…WVSRLVKKIP (200 aa)). Phosphothreonine is present on Thr1212. The Phorbol-ester/DAG-type zinc-finger motif lies at 1260 to 1315 (GHEFIPTLYHFPTNCEACMKPLWHMFKPPPALECRRCHIKCHKDHMDKKEEIIAPC). The segment at 1345–1388 (VKKIPKKPPAPDPFARSSPRTSMKIQQNQSIRRPSRQLAPNKPS) is disordered. Phosphoserine occurs at positions 1362 and 1374. Polar residues predominate over residues 1362-1376 (SPRTSMKIQQNQSIR).

Belongs to the protein kinase superfamily. AGC Ser/Thr protein kinase family. As to quaternary structure, homodimer. Interacts with IRS1. Interacts with RAF1. Interacts with RHOA (activated by GTP), RHOB and RHOC. Interacts with PPP1R12A. Interacts with EP300. Interacts with CHORDC1. Interacts with BRCA2. Interacts with NPM1; this interaction enhances ROCK2 activity. Interacts with SORL1. Interacts with PJVK. Mg(2+) serves as cofactor. In terms of processing, phosphorylation at Tyr-722 reduces its binding to RHOA and is crucial for focal adhesion dynamics. Dephosphorylation by PTPN11 stimulates its RHOA binding activity. Post-translationally, cleaved by granzyme B during apoptosis. This leads to constitutive activation of the kinase and membrane blebbing. As to expression, expressed in the brain (at protein level).

The protein resides in the cytoplasm. It localises to the cell membrane. It is found in the nucleus. The protein localises to the cytoskeleton. Its subcellular location is the microtubule organizing center. The protein resides in the centrosome. The catalysed reaction is L-seryl-[protein] + ATP = O-phospho-L-seryl-[protein] + ADP + H(+). The enzyme catalyses L-threonyl-[protein] + ATP = O-phospho-L-threonyl-[protein] + ADP + H(+). Its activity is regulated as follows. Activated by RHOA binding. Inhibited by Y-27632. Functionally, protein kinase which is a key regulator of actin cytoskeleton and cell polarity. Involved in regulation of smooth muscle contraction, actin cytoskeleton organization, stress fiber and focal adhesion formation, neurite retraction, cell adhesion and motility via phosphorylation of ADD1, BRCA2, CNN1, EZR, DPYSL2, EP300, MSN, MYL9/MLC2, NPM1, RDX, PPP1R12A and VIM. Phosphorylates SORL1 and IRF4. Acts as a negative regulator of VEGF-induced angiogenic endothelial cell activation. Positively regulates the activation of p42/MAPK1-p44/MAPK3 and of p90RSK/RPS6KA1 during myogenic differentiation. Plays an important role in the timely initiation of centrosome duplication. Inhibits keratinocyte terminal differentiation. May regulate closure of the eyelids and ventral body wall through organization of actomyosin bundles. Plays a critical role in the regulation of spine and synaptic properties in the hippocampus. Plays an important role in generating the circadian rhythm of the aortic myofilament Ca(2+) sensitivity and vascular contractility by modulating the myosin light chain phosphorylation. This Homo sapiens (Human) protein is Rho-associated protein kinase 2 (ROCK2).